The sequence spans 715 residues: MTTTSAFMLNVRLDNVAVVAIDVPGEKVNTLKAEFAAQVRAILKQIRENKALQGVVFISAKADNFIAGADINMIGHCQNAQEAETLARQGQQLMAEIQALPVPVIAAIHGACLGGGLEMALACHRRICTDDVKTVLGLPEVQLGLLPGSGGTQRLPRLVGVSTALDMILTGKQLRARQALRAGLVDDVVPQTILLEAAVELAKKERLAQRTLPVRERILAGPLGRALLFRLVRKKTAQKTQGNYPATERIIDVIETGLAQGSSSGYDAEARAFGELAMTPQSQALRAIFFASTEVKKDPGSDAPPGPLNSVGILGGGLMGGGIAWVTACKGGLPVRIKDINTQGINHALKYSWDLLETKVRRRHIKASERDKQLALISGSTDYRGFSHRDLVIEAVFEDLPLKQQMVAEVEQNCAAHTIFASNTSSLPIGDIAANAARPEQVIGLHFFSPVEKMPLVEVIPHASTSAQTIATTVKLAKKQGKTPIVVSDKAGFYVNRILAPYINEAIRMLTEGERVEHIDAALVKFGFPVGPIQLLDEVGIDTGTKIIPVLEAAYGERFSAPANVVASILNDDRKGRKNGRGFYLYGEKGRKSKKQVDPAIYKLIGVQGQSRLSAQQVADRCVMLMLNEAARCFDEKVIRSARDGDIGAVFGIGFPPFLGGPFRYMDALGPGEMVATLQRLAALYGPRYAPCEQLVRMAERREHFWTNGETDQGN.

The segment at 1-190 is enoyl-CoA hydratase; it reads MTTTSAFMLN…RAGLVDDVVP (190 aa). Residues 306–715 are 3-hydroxyacyl-CoA dehydrogenase; that stretch reads GPLNSVGILG…WTNGETDQGN (410 aa).

This sequence in the N-terminal section; belongs to the enoyl-CoA hydratase/isomerase family. It in the central section; belongs to the 3-hydroxyacyl-CoA dehydrogenase family. In terms of assembly, heterotetramer of two alpha chains (FadJ) and two beta chains (FadI).

It localises to the cytoplasm. It catalyses the reaction a (3S)-3-hydroxyacyl-CoA = a (2E)-enoyl-CoA + H2O. The enzyme catalyses a 4-saturated-(3S)-3-hydroxyacyl-CoA = a (3E)-enoyl-CoA + H2O. It carries out the reaction a (3S)-3-hydroxyacyl-CoA + NAD(+) = a 3-oxoacyl-CoA + NADH + H(+). The catalysed reaction is (3S)-3-hydroxybutanoyl-CoA = (3R)-3-hydroxybutanoyl-CoA. The protein operates within lipid metabolism; fatty acid beta-oxidation. Its function is as follows. Catalyzes the formation of a hydroxyacyl-CoA by addition of water on enoyl-CoA. Also exhibits 3-hydroxyacyl-CoA epimerase and 3-hydroxyacyl-CoA dehydrogenase activities. The protein is Fatty acid oxidation complex subunit alpha of Salmonella schwarzengrund (strain CVM19633).